Here is a 659-residue protein sequence, read N- to C-terminus: MFGKLTLKAIPVDEPIIMVTYISIILIALFISFSITYFKKWKYLWYEWFTTVDHKKISIMYGILAFIMLFRGFVDAILMRTQQVIASSGNTGFLPPHHYDQIFTAHGVIMIFFVAMPLVIGLMNLVVPLQIGARDVAFPFLNNLSFWLNVSGAILLTLSLGIGEFAQTGWLAYPPLSEVKYSPGVGVDYWIWSLQISGVGTTLTGINFLITILKMRAPGMCFFKMPVFTWAALCTNILIVISFPVLTTTLLLLTLDRCFDFHFFTNNFGGNPMMYVNLIWIWGHPEVYILVLPVFGVFSEVVATFSKKRLFGYVSLVWATLAITILSFIVWLHHFFTMGAGSNVNAFFGITTMIIAIPTGVKIFNWLFTMYQGRVHMHSSMLWTIGFLITFSIGGMTGVLLSIPPADFILHNSLFLVAHFHNVIIGGVVFGCFAGINYWFPKLFGFILNELWGKRAFWFWIIGFFTAFMPLYFLGFMGMTRRLSQNIDIEFHFLLSIAAIGAILIGIGILCQIIQFWVSVRDRHINLDVTGDPWDGRTLEWSTSSPAPLYNFAIIPHIKNKDDFWELKKQKNQVQKKQYSAIHMPKNTGLGIFISFFSLLFGFSAVWNIIWLSFLSFLVVIISLIFKSIDENTEYTVSVKEIESIENRHLENVQKAGLK.

Over 1 to 14 the chain is Extracellular; that stretch reads MFGKLTLKAIPVDE. Residues 15-35 form a helical membrane-spanning segment; sequence PIIMVTYISIILIALFISFSI. Residues 36 to 58 are Cytoplasmic-facing; the sequence is TYFKKWKYLWYEWFTTVDHKKIS. A helical membrane pass occupies residues 59-79; that stretch reads IMYGILAFIMLFRGFVDAILM. The a ubiquinone site is built by Arg71, Asp75, and His98. Residues 80-106 are Extracellular-facing; that stretch reads RTQQVIASSGNTGFLPPHHYDQIFTAH. His106 is a binding site for heme b. Residues 107 to 127 form a helical membrane-spanning segment; the sequence is GVIMIFFVAMPLVIGLMNLVV. Topologically, residues 128–145 are cytoplasmic; sequence PLQIGARDVAFPFLNNLS. A helical transmembrane segment spans residues 146-166; that stretch reads FWLNVSGAILLTLSLGIGEFA. Residues 167-189 lie on the Extracellular side of the membrane; sequence QTGWLAYPPLSEVKYSPGVGVDY. Position 170 (Trp170) interacts with heme b. A helical membrane pass occupies residues 190 to 210; it reads WIWSLQISGVGTTLTGINFLI. Residues 211–225 lie on the Cytoplasmic side of the membrane; it reads TILKMRAPGMCFFKM. The helical transmembrane segment at 226–246 threads the bilayer; sequence PVFTWAALCTNILIVISFPVL. The Extracellular segment spans residues 247-277; sequence TTTLLLLTLDRCFDFHFFTNNFGGNPMMYVN. The chain crosses the membrane as a helical span at residues 278-298; the sequence is LIWIWGHPEVYILVLPVFGVF. His284 provides a ligand contact to Cu(2+). Residues 284–288 constitute a cross-link (1'-histidyl-3'-tyrosine (His-Tyr)); sequence HPEVY. Tyr288 provides a ligand contact to Fe(II)-heme o. Over 299-309 the chain is Cytoplasmic; sequence SEVVATFSKKR. The chain crosses the membrane as a helical span at residues 310-330; the sequence is LFGYVSLVWATLAITILSFIV. The Extracellular portion of the chain corresponds to 331–347; sequence WLHHFFTMGAGSNVNAF. 2 residues coordinate Cu(2+): His333 and His334. The helical transmembrane segment at 348–368 threads the bilayer; it reads FGITTMIIAIPTGVKIFNWLF. Residues 369–380 are Cytoplasmic-facing; that stretch reads TMYQGRVHMHSS. A helical membrane pass occupies residues 381 to 401; it reads MLWTIGFLITFSIGGMTGVLL. Residues 402 to 413 lie on the Extracellular side of the membrane; that stretch reads SIPPADFILHNS. His411 and His419 together coordinate Fe(II)-heme o. The chain crosses the membrane as a helical span at residues 414-434; the sequence is LFLVAHFHNVIIGGVVFGCFA. Heme b is bound at residue His421. Residues 435-456 are Cytoplasmic-facing; that stretch reads GINYWFPKLFGFILNELWGKRA. A helical transmembrane segment spans residues 457-477; it reads FWFWIIGFFTAFMPLYFLGFM. Residues 478–490 lie on the Extracellular side of the membrane; that stretch reads GMTRRLSQNIDIE. Heme b is bound by residues Arg481 and Arg482. A helical membrane pass occupies residues 491–511; the sequence is FHFLLSIAAIGAILIGIGILC. Residues 512–580 lie on the Cytoplasmic side of the membrane; that stretch reads QIIQFWVSVR…KNQVQKKQYS (69 aa). Residues 581 to 601 traverse the membrane as a helical segment; that stretch reads AIHMPKNTGLGIFISFFSLLF. Topologically, residues 602 to 605 are extracellular; the sequence is GFSA. Residues 606-626 form a helical membrane-spanning segment; that stretch reads VWNIIWLSFLSFLVVIISLIF. Topologically, residues 627 to 659 are cytoplasmic; the sequence is KSIDENTEYTVSVKEIESIENRHLENVQKAGLK.

It belongs to the heme-copper respiratory oxidase family. As to quaternary structure, the cytochrome bo(3) ubiquinol oxidase complex is a heterooctamer of two A chains, two B chains, two C chains and two D chains. Requires Cu(2+) as cofactor. Heme b is required as a cofactor. Fe(II)-heme o serves as cofactor.

It localises to the cell membrane. It carries out the reaction 2 a ubiquinol + O2 + n H(+)(in) = 2 a ubiquinone + 2 H2O + n H(+)(out). In terms of biological role, cytochrome bo(3) ubiquinol oxidase is the terminal enzyme in the aerobic respiratory chain. Catalyzes the four-electron reduction of O2 to water, using a ubiquinol as a membrane soluble electron donor for molecular oxygen reduction. Has proton pump activity across the membrane in addition to electron transfer, pumping 2 protons/electron and generating a proton motive force. All the redox centers of this enzyme complex are located within the largest subunit, subunit I. Protons are probably pumped via D- and K- channels found in this subunit. In Buchnera aphidicola subsp. Schizaphis graminum (strain Sg), this protein is Cytochrome bo(3) ubiquinol oxidase subunit 1 (cyoB).